Here is a 177-residue protein sequence, read N- to C-terminus: 2''-aminoglycoside nucleotidyltransferase (177 aa).

The tract at residues 1–92 is N-terminal domain; the sequence is MDTTQVTLIH…ELLDCEPAWW (92 aa). Mg(2+)-binding residues include Asp-44, Asp-46, and Asp-86. Asp-86 acts as the Proton acceptor in catalysis. The tract at residues 93-177 is C-terminal domain; it reads ADEAYEIAEA…RAAFRSRYAA (85 aa). Position 100 (Ala-100) interacts with kanamycin A.

Monomer. Mg(2+) is required as a cofactor.

It carries out the reaction nucleoside triphosphate + gentamicin = diphosphate + 2''-nucleotidylgentamicin.. In terms of biological role, mediates bacterial resistance to kanamycin, gentamicin, dibekacin, sisomicin and tobramycin by adenylating the 2''-hydroxyl group of these antibiotics. This is 2''-aminoglycoside nucleotidyltransferase from Klebsiella pneumoniae.